The sequence spans 337 residues: Phosphate acyltransferase (337 aa).

Belongs to the PlsX family. Homodimer. Probably interacts with PlsY.

The protein resides in the cytoplasm. It catalyses the reaction a fatty acyl-[ACP] + phosphate = an acyl phosphate + holo-[ACP]. It participates in lipid metabolism; phospholipid metabolism. Its function is as follows. Catalyzes the reversible formation of acyl-phosphate (acyl-PO(4)) from acyl-[acyl-carrier-protein] (acyl-ACP). This enzyme utilizes acyl-ACP as fatty acyl donor, but not acyl-CoA. The sequence is that of Phosphate acyltransferase from Hydrogenovibrio crunogenus (strain DSM 25203 / XCL-2) (Thiomicrospira crunogena).